A 282-amino-acid polypeptide reads, in one-letter code: Biotin synthase (282 aa).

The Radical SAM core domain occupies 1-228 (MQEIFLCSIS…NARLMVAGGR (228 aa)). Residues C17, C21, and C24 each coordinate [4Fe-4S] cluster. Residues C61, C96, C154, and R221 each coordinate [2Fe-2S] cluster.

This sequence belongs to the radical SAM superfamily. Biotin synthase family. Homodimer. The cofactor is [4Fe-4S] cluster. Requires [2Fe-2S] cluster as cofactor.

It catalyses the reaction (4R,5S)-dethiobiotin + (sulfur carrier)-SH + 2 reduced [2Fe-2S]-[ferredoxin] + 2 S-adenosyl-L-methionine = (sulfur carrier)-H + biotin + 2 5'-deoxyadenosine + 2 L-methionine + 2 oxidized [2Fe-2S]-[ferredoxin]. Its pathway is cofactor biosynthesis; biotin biosynthesis; biotin from 7,8-diaminononanoate: step 2/2. Functionally, catalyzes the conversion of dethiobiotin (DTB) to biotin by the insertion of a sulfur atom into dethiobiotin via a radical-based mechanism. The polypeptide is Biotin synthase (Helicobacter pylori (strain HPAG1)).